A 255-amino-acid polypeptide reads, in one-letter code: Sorbose reductase sou1 (255 aa).

NADP(+) is bound by residues I21 and N95. Residues S148 and Y163 each act as proton donor in the active site. Y163, K167, I195, and T197 together coordinate NADP(+). The Lowers pKa of active site Tyr role is filled by K167.

The protein belongs to the short-chain dehydrogenases/reductases (SDR) family.

It carries out the reaction D-sorbitol + NADP(+) = keto-L-sorbose + NADPH + H(+). In terms of biological role, catalyzes the NADP dependent reduction of L-sorbose to D-glucitol. The protein is Sorbose reductase sou1 (sou1) of Schizosaccharomyces pombe (strain 972 / ATCC 24843) (Fission yeast).